The following is a 603-amino-acid chain: ABC transporter E family member 1 (603 aa).

4Fe-4S ferredoxin-type domains follow at residues Arg-7–Ile-39 and Lys-46–Leu-75. 2 consecutive ABC transporter domains span residues Ile-70 to Gly-315 and Val-344 to Leu-566. Residues Gly-110–Ser-117 and Gly-381–Thr-388 each bind ATP.

It belongs to the ABC transporter superfamily. ABCE family. Expressed in roots, stems, leaves, flowers and siliques.

The protein resides in the membrane. This chain is ABC transporter E family member 1 (ABCE1), found in Arabidopsis thaliana (Mouse-ear cress).